The primary structure comprises 65 residues: MKAKEWREKSLDEIRQKNKELEEELFNLRMRSAAGQLESSAALGKIKRDIARAKTVLREKGVKEH.

Belongs to the universal ribosomal protein uL29 family.

This is Large ribosomal subunit protein uL29 from Syntrophus aciditrophicus (strain SB).